The chain runs to 67 residues: Conotoxin Cal14.2c (67 aa).

Residues 1–20 form the signal peptide; that stretch reads MNVTVMFLVLLLLTMPLTDG. Residues 21-48 constitute a propeptide that is removed on maturation; that stretch reads FNIRATNGGELFGPVQRDAGNVLDHGFQ.

This sequence belongs to the conotoxin L superfamily. In terms of processing, contains 2 disulfide bonds. Expressed by the venom duct.

Its subcellular location is the secreted. In terms of biological role, probable neurotoxin with unknown target. Possibly targets ion channels. This Californiconus californicus (California cone) protein is Conotoxin Cal14.2c.